The sequence spans 784 residues: Rabenosyn-5 (784 aa).

N-acetylalanine is present on Ala-2. Residue Ser-3 is modified to Phosphoserine. The C2H2-type zinc finger occupies 14-37; that stretch reads FLCPLCLKDLQSFYQLHSHYEEEH. Residues 100-263 are necessary for the correct targeting to endosomes; the sequence is RSHLSDFKKH…HCKDTLLKRE (164 aa). The FYVE-type zinc-finger motif lies at 157-260; sequence DQDVPFCPDC…CCTHCKDTLL (104 aa). Zn(2+)-binding residues include Cys-163, Cys-166, Cys-179, Cys-182, Cys-187, and Cys-190. The span at 207–224 shows a compositional bias: polar residues; that stretch reads KESLSTHTSPSQSPNSVH. The tract at residues 207 to 241 is disordered; sequence KESLSTHTSPSQSPNSVHGSRRGSISSMSSVSSVL. Ser-215, Ser-219, Ser-226, and Ser-230 each carry phosphoserine. Residues 228 to 240 are compositionally biased toward low complexity; sequence RGSISSMSSVSSV. Positions 252 and 255 each coordinate Zn(2+). The tract at residues 264–500 is necessary for interaction with RAB4A; sequence QQIDEKEHTP…QLQDEYDQQQ (237 aa). The necessary for interaction with EHD1 stretch occupies residues 264–784; sequence QQIDEKEHTP…TLAKQKGGTD (521 aa). 2 coiled-coil regions span residues 378 to 414 and 472 to 531; these read TKEQ…LEER and QAKA…RELE. The segment covering 390-400 has biased composition (basic and acidic residues); the sequence is KEEMERKRAVE. Residues 390–429 form a disordered region; the sequence is KEEMERKRAVERQAALESQRRLEERQSGLASRAANGEVAS. Positions 496–515 constitute a UIM domain; it reads YDQQQTEKAIELSRRQAEEE. The segment at 574 to 732 is disordered; it reads DLGSSPVPSS…DSDSGPEAEE (159 aa). A compositionally biased stretch (polar residues) spans 579 to 598; sequence PVPSSTAPKTPSLSSTQPTR. Residues 627-784 form a necessary for interaction with RAB5A region; it reads PFDEEDLSSP…TLAKQKGGTD (158 aa). Residues 663-673 show a composition bias toward acidic residues; the sequence is PFEEEDEEEEA. Ser-684 carries the post-translational modification Phosphoserine. Residues 722 to 732 are compositionally biased toward acidic residues; that stretch reads MDSDSGPEAEE.

As to quaternary structure, interacts with EHD1, RAB4A, RAB5A, RAB14, RAB22A, RAB24 and VPS45. Binds simultaneously to RAB4A and RAB5A in vitro. Interacts with RAB4A and RAB5A that has been activated by GTP binding.

The protein resides in the cell membrane. It is found in the early endosome membrane. Its function is as follows. Rab4/Rab5 effector protein acting in early endocytic membrane fusion and membrane trafficking of recycling endosomes. Required for endosome fusion either homotypically or with clathrin coated vesicles. Plays a role in the lysosomal trafficking of CTSD/cathepsin D from the Golgi to lysosomes. Also promotes the recycling of transferrin directly from early endosomes to the plasma membrane. Binds phospholipid vesicles containing phosphatidylinositol 3-phosphate (PtdInsP3). Plays a role in the recycling of transferrin receptor to the plasma membrane. In Homo sapiens (Human), this protein is Rabenosyn-5.